We begin with the raw amino-acid sequence, 419 residues long: UDP-N-acetylglucosamine 1-carboxyvinyltransferase (419 aa).

22-23 (KN) contributes to the phosphoenolpyruvate binding site. R93 lines the UDP-N-acetyl-alpha-D-glucosamine pocket. C117 (proton donor) is an active-site residue. C117 is modified (2-(S-cysteinyl)pyruvic acid O-phosphothioketal). Residues D306 and I328 each contribute to the UDP-N-acetyl-alpha-D-glucosamine site.

It belongs to the EPSP synthase family. MurA subfamily.

The protein resides in the cytoplasm. It catalyses the reaction phosphoenolpyruvate + UDP-N-acetyl-alpha-D-glucosamine = UDP-N-acetyl-3-O-(1-carboxyvinyl)-alpha-D-glucosamine + phosphate. It participates in cell wall biogenesis; peptidoglycan biosynthesis. Its function is as follows. Cell wall formation. Adds enolpyruvyl to UDP-N-acetylglucosamine. The protein is UDP-N-acetylglucosamine 1-carboxyvinyltransferase of Magnetococcus marinus (strain ATCC BAA-1437 / JCM 17883 / MC-1).